The chain runs to 80 residues: Serine protease inhibitor Kazal-type 6 (80 aa).

The first 23 residues, 1 to 23, serve as a signal peptide directing secretion; the sequence is MKTSGVFLLLSLALFCFFSGVFG. The residue at position 24 (Q24) is a Pyrrolidone carboxylic acid. Positions 24-80 constitute a Kazal-like domain; that stretch reads QGAQVDCAEFKDPKVYCTRESNPHCGSDGQTYGNKCAFCKAVMKSGGKINLKHRGKC. Disulfide bonds link C30-C62, C40-C59, and C48-C80.

As to expression, seminal plasma.

Its subcellular location is the secreted. In terms of biological role, serine protease inhibitor selective for kallikreins. Efficiently inhibits KLK4, KLK5, KLK6, KLK7, KLK12, KLK13 and KLK14. Doesn't inhibit KLK8. Inhibits acrosin, trypsin, and chymotrypsin. This chain is Serine protease inhibitor Kazal-type 6 (SPINK6), found in Bos taurus (Bovine).